The primary structure comprises 372 residues: Aminodeoxyfutalosine synthase (372 aa).

In terms of domain architecture, Radical SAM core spans 53-292; it reads HKTYFVHSIR…VARLYLDNFP (240 aa). Positions 69, 73, and 76 each coordinate [4Fe-4S] cluster.

The protein belongs to the radical SAM superfamily. MqnE family. The cofactor is [4Fe-4S] cluster.

It carries out the reaction 3-[(1-carboxyvinyl)-oxy]benzoate + S-adenosyl-L-methionine + H2O = 6-amino-6-deoxyfutalosine + hydrogencarbonate + L-methionine + H(+). It participates in quinol/quinone metabolism; menaquinone biosynthesis. Functionally, radical SAM enzyme that catalyzes the addition of the adenosyl radical to the double bond of 3-[(1-carboxyvinyl)oxy]benzoate, leading to aminodeoxyfutalosine (AFL), a key intermediate in the formation of menaquinone (MK, vitamin K2) from chorismate. This chain is Aminodeoxyfutalosine synthase, found in Thermus thermophilus (strain ATCC 27634 / DSM 579 / HB8).